Reading from the N-terminus, the 221-residue chain is 7-cyano-7-deazaguanine synthase (221 aa).

Position 8 to 18 (8 to 18 (LSGGMDSAAVI)) interacts with ATP. 4 residues coordinate Zn(2+): Cys186, Cys196, Cys199, and Cys202.

The protein belongs to the QueC family. The cofactor is Zn(2+).

It catalyses the reaction 7-carboxy-7-deazaguanine + NH4(+) + ATP = 7-cyano-7-deazaguanine + ADP + phosphate + H2O + H(+). It participates in purine metabolism; 7-cyano-7-deazaguanine biosynthesis. Catalyzes the ATP-dependent conversion of 7-carboxy-7-deazaguanine (CDG) to 7-cyano-7-deazaguanine (preQ(0)). In Stenotrophomonas maltophilia (strain K279a), this protein is 7-cyano-7-deazaguanine synthase.